The primary structure comprises 229 residues: Ribonuclease 3 (229 aa).

One can recognise an RNase III domain in the interval 5–127; sequence LARLERQLGY…LIGAIYLDAG (123 aa). Residue Glu-40 participates in Mg(2+) binding. The active site involves Asp-44. Mg(2+) contacts are provided by Asp-113 and Glu-116. Glu-116 is a catalytic residue. A DRBM domain is found at 154–224; that stretch reads DPKTRLQEFL…AAAALIALGV (71 aa).

This sequence belongs to the ribonuclease III family. In terms of assembly, homodimer. It depends on Mg(2+) as a cofactor.

The protein resides in the cytoplasm. The enzyme catalyses Endonucleolytic cleavage to 5'-phosphomonoester.. Functionally, digests double-stranded RNA. Involved in the processing of primary rRNA transcript to yield the immediate precursors to the large and small rRNAs (23S and 16S). Processes some mRNAs, and tRNAs when they are encoded in the rRNA operon. Processes pre-crRNA and tracrRNA of type II CRISPR loci if present in the organism. In Pseudomonas fluorescens (strain SBW25), this protein is Ribonuclease 3.